A 144-amino-acid chain; its full sequence is Putative sugar phosphate isomerase RBE_0278 (144 aa).

H12 is a substrate binding site. Catalysis depends on H101, which acts as the Proton donor. Residue R135 participates in substrate binding.

The protein belongs to the LacAB/RpiB family.

This Rickettsia bellii (strain RML369-C) protein is Putative sugar phosphate isomerase RBE_0278.